Consider the following 712-residue polypeptide: Polyribonucleotide nucleotidyltransferase (712 aa).

Asp487 and Asp493 together coordinate Mg(2+). The 60-residue stretch at 554 to 613 (PKIITMTINPDKIRDVIGPSGKQINKIIEETGVKIDIEQDGTVFISSINQEMNDKAKKII) folds into the KH domain. Residues 623-691 (GEIYEGKVKR…KQGRVNLSRK (69 aa)) form the S1 motif domain.

The protein belongs to the polyribonucleotide nucleotidyltransferase family. Requires Mg(2+) as cofactor.

The protein resides in the cytoplasm. It catalyses the reaction RNA(n+1) + phosphate = RNA(n) + a ribonucleoside 5'-diphosphate. In terms of biological role, involved in mRNA degradation. Catalyzes the phosphorolysis of single-stranded polyribonucleotides processively in the 3'- to 5'-direction. This Bacillus cereus (strain 03BB102) protein is Polyribonucleotide nucleotidyltransferase.